Consider the following 179-residue polypeptide: Large ribosomal subunit protein uL5c (179 aa).

It belongs to the universal ribosomal protein uL5 family. As to quaternary structure, part of the 50S ribosomal subunit; contacts the 5S rRNA.

It is found in the plastid. The protein resides in the organellar chromatophore. Its function is as follows. Binds 5S rRNA, forms part of the central protuberance of the 50S subunit. This Paulinella chromatophora protein is Large ribosomal subunit protein uL5c (rpl5).